The chain runs to 507 residues: Steroid 17-alpha-hydroxylase/17,20 lyase (507 aa).

Cys-441 contributes to the heme binding site.

This sequence belongs to the cytochrome P450 family. The cofactor is heme.

It localises to the endoplasmic reticulum membrane. Its subcellular location is the microsome membrane. The enzyme catalyses a C21-steroid + reduced [NADPH--hemoprotein reductase] + O2 = a 17alpha-hydroxy-C21-steroid + oxidized [NADPH--hemoprotein reductase] + H2O + H(+). The catalysed reaction is progesterone + reduced [NADPH--hemoprotein reductase] + O2 = 17alpha-hydroxyprogesterone + oxidized [NADPH--hemoprotein reductase] + H2O + H(+). It carries out the reaction pregnenolone + reduced [NADPH--hemoprotein reductase] + O2 = 17alpha-hydroxypregnenolone + oxidized [NADPH--hemoprotein reductase] + H2O + H(+). It catalyses the reaction 17alpha-hydroxyprogesterone + reduced [NADPH--hemoprotein reductase] + O2 = androst-4-ene-3,17-dione + acetate + oxidized [NADPH--hemoprotein reductase] + H2O + 2 H(+). The enzyme catalyses 17alpha-hydroxyprogesterone + reduced [NADPH--hemoprotein reductase] + O2 = 16alpha,17alpha-dihydroxyprogesterone + oxidized [NADPH--hemoprotein reductase] + H2O + H(+). The catalysed reaction is 16alpha,17alpha-dihydroxyprogesterone + reduced [NADPH--hemoprotein reductase] + O2 = 6beta,16alpha,17alpha-trihydroxyprogesterone + oxidized [NADPH--hemoprotein reductase] + H2O + H(+). It carries out the reaction 17alpha-hydroxypregnenolone + reduced [NADPH--hemoprotein reductase] + O2 = 3beta-hydroxyandrost-5-en-17-one + acetate + oxidized [NADPH--hemoprotein reductase] + H2O + 2 H(+). It catalyses the reaction 16alpha,17alpha-dihydroxypregnenolone + reduced [NADPH--hemoprotein reductase] + O2 = 3beta,16alpha-dihydroxy-androst-5-en-17-one + acetate + oxidized [NADPH--hemoprotein reductase] + H2O + 2 H(+). The enzyme catalyses 3beta-hydroxyandrost-5-en-17-one + reduced [NADPH--hemoprotein reductase] + O2 = 3beta,16alpha-dihydroxy-androst-5-en-17-one + oxidized [NADPH--hemoprotein reductase] + H2O + H(+). The catalysed reaction is androst-4-ene-3,17-dione + reduced [NADPH--hemoprotein reductase] + O2 = 16alpha-hydroxyandrost-4-ene-3,17-dione + oxidized [NADPH--hemoprotein reductase] + H2O + H(+). It participates in steroid hormone biosynthesis. It functions in the pathway steroid biosynthesis; glucocorticoid biosynthesis. Regulated predominantly by intracellular cAMP levels. The 17,20-lyase activity is stimulated by cytochrome b5, which acts as an allosteric effector increasing the Vmax of the lyase activity. Functionally, a cytochrome P450 monooxygenase involved in corticoid and androgen biosynthesis. Catalyzes 17-alpha hydroxylation of C21 steroids, which is common for both pathways. A second oxidative step, required only for androgen synthesis, involves an acyl-carbon cleavage. The 17-alpha hydroxy intermediates, as part of adrenal glucocorticoids biosynthesis pathway, are precursors of cortisol. Hydroxylates steroid hormones, pregnenolone and progesterone to form 17-alpha hydroxy metabolites, followed by the cleavage of the C17-C20 bond to form C19 steroids, dehydroepiandrosterone (DHEA) and androstenedione. Has 16-alpha hydroxylase activity. Catalyzes 16-alpha hydroxylation of 17-alpha hydroxy pregnenolone, followed by the cleavage of the C17-C20 bond to form 16-alpha-hydroxy DHEA. Also 16-alpha hydroxylates androgens, relevant for estriol synthesis. Mechanistically, uses molecular oxygen inserting one oxygen atom into a substrate, and reducing the second into a water molecule, with two electrons provided by NADPH via cytochrome P450 reductase (CPR; NADPH-ferrihemoprotein reductase). The protein is Steroid 17-alpha-hydroxylase/17,20 lyase (Cyp17a1) of Rattus norvegicus (Rat).